The primary structure comprises 1066 residues: DNA primase (1066 aa).

The interval 694-727 (DGPSAGGDDGDGDWFPDAGGPGDEEWEEDTDPMD) is disordered. Residues 715–725 (GDEEWEEDTDP) show a composition bias toward acidic residues. Residues 995–1035 (CLRFKHGRASRATARTFLALSVGTNNRLCASLCQQCFATKC) form a CHC2-type zinc finger.

It belongs to the herpesviridae DNA primase family. In terms of assembly, associates with the helicase and the primase-associated factor to form the helicase-primase factor.

Its subcellular location is the host nucleus. Essential component of the helicase/primase complex. Unwinds the DNA at the replication forks and generates single-stranded DNA for both leading and lagging strand synthesis. The primase initiates primer synthesis and thereby produces large amount of short RNA primers on the lagging strand that the polymerase elongates using dNTPs. The protein is DNA primase of Human herpesvirus 2 (strain HG52) (HHV-2).